The following is a 102-amino-acid chain: Membrane-bound protein LytA (102 aa).

The first 16 residues, 1-16 (MKKFIALLFFILLLSG), serve as a signal peptide directing secretion. Cysteine 17 carries N-palmitoyl cysteine lipidation. Cysteine 17 carries S-diacylglycerol cysteine lipidation.

It is found in the cell membrane. Possible role in the secretion of LytB and LytC. The polypeptide is Membrane-bound protein LytA (lytA) (Bacillus subtilis (strain 168)).